A 334-amino-acid chain; its full sequence is MHQNLITRWLFISCIMVILMIIIGGITRLTGAGLSIVEWSPVTGLLPPFSFESWQVEFAKYKAFPEYQSVNYDITLSQFKFIYLLEFIHRLLGRITTLIYIVPLICFYFQGVIKKCKMLPYIIALLLFCIQGFMGWYMVESGLLNNHSVSHFRLAFHLIIAVIIYHILFYQLIKNYCDLLLIPSQKLLLIFSCISITVIYIQIFLGALVAGLDAGLVYNNFPLMGDNFIPIEIQDNLFNLTNLYDPVFMQFMHRLGGFSVFAVNAILVICLFKVKHLQLTKIAYFLIIVLLIQIATGIITIVYSVPIIIASIHQFVAIILLSIIIWCYFLFKNS.

Helical transmembrane passes span 6–26 (ITRWLFISCIMVILMIIIGGI), 93–113 (GRITTLIYIVPLICFYFQGVI), 119–139 (LPYIIALLLFCIQGFMGWYMV), 154–174 (LAFHLIIAVIIYHILFYQLIK), and 189–209 (LIFSCISITVIYIQIFLGALV). Histidine 253 contacts heme. 3 consecutive transmembrane segments (helical) span residues 255-275 (LGGFSVFAVNAILVICLFKVK), 282-302 (IAYFLIIVLLIQIATGIITIV), and 305-325 (VPIIIASIHQFVAIILLSIII). Heme is bound at residue histidine 313.

It belongs to the COX15/CtaA family. Type 2 subfamily. Interacts with CtaB. Heme b serves as cofactor.

The protein localises to the cell membrane. The enzyme catalyses Fe(II)-heme o + 2 A + H2O = Fe(II)-heme a + 2 AH2. It participates in porphyrin-containing compound metabolism; heme A biosynthesis; heme A from heme O: step 1/1. Catalyzes the conversion of heme O to heme A by two successive hydroxylations of the methyl group at C8. The first hydroxylation forms heme I, the second hydroxylation results in an unstable dihydroxymethyl group, which spontaneously dehydrates, resulting in the formyl group of heme A. This is Heme A synthase from Rickettsia prowazekii (strain Madrid E).